The primary structure comprises 420 residues: FAD-dependent monooxygenase ntnJ (420 aa).

The helical transmembrane segment at 12–31 (FRVIVVGAGIGGLSAAVALA) threads the bilayer. Residues Glu-41 and Ala-54 each contribute to the FAD site. Asn-124 is a glycosylation site (N-linked (GlcNAc...) asparagine). Arg-187 is an active-site residue. N-linked (GlcNAc...) asparagine glycosylation is present at Asn-264. FAD is bound by residues Asp-302 and Val-315.

The protein belongs to the paxM FAD-dependent monooxygenase family. Requires FAD as cofactor.

Its subcellular location is the membrane. It participates in secondary metabolite biosynthesis; terpenoid biosynthesis. Functionally, FAD-dependent monooxygenase; part of the gene cluster that mediates the biosynthesis of the meroterpenoids nectripenoids A and B, as well as cochliquninone D and isocochliquninone E. The pathway probably begins with the HR-PKS ntnH that catalyzes two chain-extension steps to form a reduced triketide, which then primes the SAT domain in the NR-PKS ntnG to initiate three more cycles of extension to give a linear hexaketide corresponding to the polyketide part of nectripenoids. The FAD-dependent monooxygenase ntnJ then performs an oxidative decarboxylation at C11 of the ntnH/ntnG product, via an electrophilic aromatic hydroxylation with concomitant ipso-decarboxylation. The membrane-bound polyprenyl transferase ntnF then introduces a farnesyl group before the FAD-dependent monooxygenase ntnK functions as the first epoxidase on terminal C12'-C13' olefin, followed by a second epoxidation on C7'-C8' catalyzed by ntnA. The terpene cyclase/mutase ntnI then initiates the sequential tricyclic ring formation through protonation of the terminal epoxide and catalyzes the regioselective and stereoselective 6/6/6-tricyclic ring formation. The cytochrome P450 monooxygenase ntnM may then hydroxylate C1'. This chain is FAD-dependent monooxygenase ntnJ, found in Nectria sp.